The sequence spans 108 residues: Small ribosomal subunit protein uS10 (108 aa).

This sequence belongs to the universal ribosomal protein uS10 family. Part of the 30S ribosomal subunit.

Involved in the binding of tRNA to the ribosomes. The protein is Small ribosomal subunit protein uS10 of Rhodopirellula baltica (strain DSM 10527 / NCIMB 13988 / SH1).